A 366-amino-acid polypeptide reads, in one-letter code: Mitochondrial division protein fszB (366 aa).

GTP is bound by residues Gly70–Asn74, Gly157–Gly159, Glu190, and Asp238.

The protein belongs to the FtsZ family.

The protein localises to the mitochondrion. Probably involved in mitochondrion division process. Binds to and hydrolyzes GTP. The chain is Mitochondrial division protein fszB (fszB) from Dictyostelium discoideum (Social amoeba).